The following is a 131-amino-acid chain: Small ribosomal subunit protein uS8 (131 aa).

This sequence belongs to the universal ribosomal protein uS8 family. Part of the 30S ribosomal subunit. Contacts proteins S5 and S12.

Functionally, one of the primary rRNA binding proteins, it binds directly to 16S rRNA central domain where it helps coordinate assembly of the platform of the 30S subunit. This Leptothrix cholodnii (strain ATCC 51168 / LMG 8142 / SP-6) (Leptothrix discophora (strain SP-6)) protein is Small ribosomal subunit protein uS8.